The primary structure comprises 350 residues: Outer membrane protein A (350 aa).

The signal sequence occupies residues M1–A21. The next 8 membrane-spanning stretches (beta stranded) occupy residues T27–S37, Q55–V66, V70–W78, Q96–P107, L112–G120, P146–A155, I160–Q167, and L186–R194. 4 repeat units span residues A205 to P206, A207 to P208, A209 to P210, and A211 to P212. A 4 X 2 AA tandem repeats of A-P region spans residues A205–P212. An OmpA-like domain is found at V214 to K342. Cysteines 315 and 327 form a disulfide.

The protein belongs to the outer membrane OOP (TC 1.B.6) superfamily. OmpA family. As to quaternary structure, monomer and homodimer.

It localises to the cell outer membrane. Functionally, with TolR probably plays a role in maintaining the position of the peptidoglycan cell wall in the periplasm. Acts as a porin with low permeability that allows slow penetration of small solutes; an internal gate slows down solute passage. Required for conjugation with F-type plasmids; probably serves as the mating receptor on recipient cells. The sequence is that of Outer membrane protein A from Salmonella typhi.